Consider the following 98-residue polypeptide: Small ribosomal subunit protein bS6 (98 aa).

Belongs to the bacterial ribosomal protein bS6 family.

Functionally, binds together with bS18 to 16S ribosomal RNA. This Staphylococcus haemolyticus (strain JCSC1435) protein is Small ribosomal subunit protein bS6.